The following is a 624-amino-acid chain: Glucoamylase (624 aa).

The N-terminal stretch at 1–18 is a signal peptide; the sequence is MRQFLALAAAASIAVADS. A CBM21 domain is found at 26-132; sequence NSPPDDKAVA…NSQQLNVQVE (107 aa). 7 N-linked (GlcNAc...) asparagine glycosylation sites follow: N54, N70, N98, N111, N168, N267, and N333. D340 acts as the Proton acceptor in catalysis. E343 acts as the Proton donor in catalysis. N-linked (GlcNAc...) asparagine glycans are attached at residues N460 and N582.

The protein belongs to the glycosyl hydrolase 15 family.

The catalysed reaction is Hydrolysis of terminal (1-&gt;4)-linked alpha-D-glucose residues successively from non-reducing ends of the chains with release of beta-D-glucose.. In Blastobotrys adeninivorans (Yeast), this protein is Glucoamylase (GAA).